Reading from the N-terminus, the 193-residue chain is Potassium-transporting ATPase KdpC subunit (193 aa).

The chain crosses the membrane as a helical span at residues 14–34 (ITFTFLVLCGLVYPLIVTGIA).

Belongs to the KdpC family. In terms of assembly, the system is composed of three essential subunits: KdpA, KdpB and KdpC.

Its subcellular location is the cell membrane. Part of the high-affinity ATP-driven potassium transport (or Kdp) system, which catalyzes the hydrolysis of ATP coupled with the electrogenic transport of potassium into the cytoplasm. This subunit acts as a catalytic chaperone that increases the ATP-binding affinity of the ATP-hydrolyzing subunit KdpB by the formation of a transient KdpB/KdpC/ATP ternary complex. The sequence is that of Potassium-transporting ATPase KdpC subunit from Bacillus mycoides (strain KBAB4) (Bacillus weihenstephanensis).